The sequence spans 212 residues: Proteasome subunit beta (212 aa).

Positions 1–11 (MSQEHQDVKTG) are cleaved as a propeptide — removed in mature form; by autocatalysis. T12 acts as the Nucleophile in catalysis.

The protein belongs to the peptidase T1B family. As to quaternary structure, the 20S proteasome core is composed of 14 alpha and 14 beta subunits that assemble into four stacked heptameric rings, resulting in a barrel-shaped structure. The two inner rings, each composed of seven catalytic beta subunits, are sandwiched by two outer rings, each composed of seven alpha subunits. The catalytic chamber with the active sites is on the inside of the barrel. Has a gated structure, the ends of the cylinder being occluded by the N-termini of the alpha-subunits. Is capped at one or both ends by the proteasome regulatory ATPase, PAN.

The protein resides in the cytoplasm. The enzyme catalyses Cleavage of peptide bonds with very broad specificity.. The formation of the proteasomal ATPase PAN-20S proteasome complex, via the docking of the C-termini of PAN into the intersubunit pockets in the alpha-rings, triggers opening of the gate for substrate entry. Interconversion between the open-gate and close-gate conformations leads to a dynamic regulation of the 20S proteasome proteolysis activity. In terms of biological role, component of the proteasome core, a large protease complex with broad specificity involved in protein degradation. The chain is Proteasome subunit beta from Methanocorpusculum labreanum (strain ATCC 43576 / DSM 4855 / Z).